The chain runs to 507 residues: Probable cytosol aminopeptidase (507 aa).

Positions 275 and 280 each coordinate Mn(2+). The active site involves lysine 287. Mn(2+) is bound by residues aspartate 298, aspartate 357, and glutamate 359. Arginine 361 is a catalytic residue.

Belongs to the peptidase M17 family. Requires Mn(2+) as cofactor.

The protein localises to the cytoplasm. It carries out the reaction Release of an N-terminal amino acid, Xaa-|-Yaa-, in which Xaa is preferably Leu, but may be other amino acids including Pro although not Arg or Lys, and Yaa may be Pro. Amino acid amides and methyl esters are also readily hydrolyzed, but rates on arylamides are exceedingly low.. The catalysed reaction is Release of an N-terminal amino acid, preferentially leucine, but not glutamic or aspartic acids.. In terms of biological role, presumably involved in the processing and regular turnover of intracellular proteins. Catalyzes the removal of unsubstituted N-terminal amino acids from various peptides. The sequence is that of Probable cytosol aminopeptidase from Acidobacterium capsulatum (strain ATCC 51196 / DSM 11244 / BCRC 80197 / JCM 7670 / NBRC 15755 / NCIMB 13165 / 161).